Here is a 214-residue protein sequence, read N- to C-terminus: Sugar fermentation stimulation protein homolog (214 aa).

Belongs to the SfsA family.

The chain is Sugar fermentation stimulation protein homolog from Aquifex aeolicus (strain VF5).